A 28-amino-acid chain; its full sequence is Flagellar filament 34 kDa core protein (28 aa).

It belongs to the bacterial flagellin family. In terms of assembly, the flagellum consists of an outer layer composed of repeating units of FlaA around a core that contains several antigenically related polypeptides.

It localises to the periplasmic flagellum. Its subcellular location is the periplasm. Component of the core of the flagella. In Treponema phagedenis, this protein is Flagellar filament 34 kDa core protein.